Reading from the N-terminus, the 414-residue chain is 3-oxoacyl-[acyl-carrier-protein] synthase 2 (414 aa).

Residues 3–411 (KRRVVITGLG…GTNGTLVLSR (409 aa)) enclose the Ketosynthase family 3 (KS3) domain. Catalysis depends on for beta-ketoacyl synthase activity residues cysteine 164, histidine 304, and histidine 341.

This sequence belongs to the thiolase-like superfamily. Beta-ketoacyl-ACP synthases family. As to quaternary structure, homodimer.

The enzyme catalyses a fatty acyl-[ACP] + malonyl-[ACP] + H(+) = a 3-oxoacyl-[ACP] + holo-[ACP] + CO2. The catalysed reaction is (9Z)-hexadecenoyl-[ACP] + malonyl-[ACP] + H(+) = 3-oxo-(11Z)-octadecenoyl-[ACP] + holo-[ACP] + CO2. It participates in lipid metabolism; fatty acid biosynthesis. Involved in the type II fatty acid elongation cycle. Catalyzes the elongation of a wide range of acyl-ACP by the addition of two carbons from malonyl-ACP to an acyl acceptor. Can efficiently catalyze the conversion of palmitoleoyl-ACP (cis-hexadec-9-enoyl-ACP) to cis-vaccenoyl-ACP (cis-octadec-11-enoyl-ACP), an essential step in the thermal regulation of fatty acid composition. The protein is 3-oxoacyl-[acyl-carrier-protein] synthase 2 (fabF) of Coxiella burnetii (strain RSA 493 / Nine Mile phase I).